Reading from the N-terminus, the 666-residue chain is Probable potassium transport system protein Kup (666 aa).

12 helical membrane passes run 16-36 (GFII…LYTI), 58-78 (ISLI…LIAL), 100-120 (PWLI…GALT), 141-161 (IYQN…VLFG), 165-185 (FGTG…FSFL), 221-241 (IFIL…YSDL), 253-273 (WPFV…WILA), 294-314 (VYLV…LISG), 343-363 (LYIP…VLAF), 373-393 (YGLA…YYLI), 399-419 (PILA…FFLA), and 424-444 (FMHG…VMFI).

This sequence belongs to the HAK/KUP transporter (TC 2.A.72) family.

It localises to the cell membrane. The catalysed reaction is K(+)(in) + H(+)(in) = K(+)(out) + H(+)(out). Transport of potassium into the cell. Likely operates as a K(+):H(+) symporter. This Streptococcus pyogenes serotype M1 protein is Probable potassium transport system protein Kup.